The primary structure comprises 28 residues: Kappa-stichotoxin-Shd1a/kappa-stichotoxin-Shd1b (28 aa).

The residue at position 6 (Pro6) is a 4-hydroxyproline; in form SHTX-1 (Shd1a). Cystine bridges form between Cys7–Cys19 and Cys10–Cys25.

Belongs to the sea anemone BBH family. Post-translationally, occurs in 2 forms which differ in the post-translational modification of Pro-6. In form SHTX-1 (Shd1a) Pro-6 is a hydroxyproline while in form SHTX-2 (Shd1b) Pro-6 is unmodified.

Its subcellular location is the secreted. It localises to the nematocyst. Kappa-stichotoxin-Shd1a: inhibits voltage-gated potassium channels (Kv). Its function is as follows. Kappa-stichotoxin-Shd1b: inhibits voltage-gated potassium channels (Kv). This toxin inhibits the binding of 125I-alpha-dendrotoxin to synaptosomal membranes (IC(50)=270 nM). This Stichodactyla haddoni (Saddle carpet anemone) protein is Kappa-stichotoxin-Shd1a/kappa-stichotoxin-Shd1b.